A 178-amino-acid chain; its full sequence is RNA-binding protein (178 aa).

Residues 113–178 form a disordered region; it reads PKIGSKNKKT…KGKGKRGGKR (66 aa). Residues 168–178 are compositionally biased toward basic residues; it reads SKGKGKRGGKR.

The protein belongs to the phytoreovirus RNA-binding protein family.

The protein localises to the host cytoplasm. In terms of biological role, constituent of viral factories. Binds to ssRNA and dsRNA. This chain is RNA-binding protein, found in Wound tumor virus (WTV).